The primary structure comprises 500 residues: Glycerol kinase (500 aa).

Thr13 provides a ligand contact to ADP. Thr13, Thr14, and Ser15 together coordinate ATP. Thr13 is a sn-glycerol 3-phosphate binding site. Arg17 is an ADP binding site. 4 residues coordinate sn-glycerol 3-phosphate: Arg83, Glu84, Tyr136, and Asp246. Residues Arg83, Glu84, Tyr136, Asp246, and Gln247 each contribute to the glycerol site. The ADP site is built by Thr268 and Gly311. ATP is bound by residues Thr268, Gly311, Gln315, and Gly412. The ADP site is built by Gly412 and Asn416.

The protein belongs to the FGGY kinase family.

The enzyme catalyses glycerol + ATP = sn-glycerol 3-phosphate + ADP + H(+). Its pathway is polyol metabolism; glycerol degradation via glycerol kinase pathway; sn-glycerol 3-phosphate from glycerol: step 1/1. With respect to regulation, inhibited by fructose 1,6-bisphosphate (FBP). Its function is as follows. Key enzyme in the regulation of glycerol uptake and metabolism. Catalyzes the phosphorylation of glycerol to yield sn-glycerol 3-phosphate. This is Glycerol kinase from Francisella tularensis subsp. novicida (strain U112).